Here is a 60-residue protein sequence, read N- to C-terminus: Large ribosomal subunit protein bL32 (60 aa).

The protein belongs to the bacterial ribosomal protein bL32 family.

This Fervidobacterium nodosum (strain ATCC 35602 / DSM 5306 / Rt17-B1) protein is Large ribosomal subunit protein bL32.